Here is a 403-residue protein sequence, read N- to C-terminus: Queuine tRNA-ribosyltransferase catalytic subunit 1 (403 aa).

An N-acetylalanine modification is found at alanine 2. Aspartate 105 (proton acceptor) is an active-site residue. 105-109 (DSGGF) contacts queuine. Serine 139 is subject to Phosphoserine. Queuine is bound by residues aspartate 159, glutamine 202, and glycine 229. Residues 260–266 (GVGYATD) form an RNA binding region. The active-site Nucleophile is the aspartate 279. Residues 284-288 (TRTAR) form an RNA binding; important for wobble base 34 recognition region. Residues cysteine 317, cysteine 319, cysteine 322, and histidine 348 each coordinate Zn(2+).

It belongs to the queuine tRNA-ribosyltransferase family. As to quaternary structure, heterodimer of a catalytic subunit QTRT1 and an accessory subunit QTRT2. It depends on Zn(2+) as a cofactor. In terms of tissue distribution, expressed in brain, heart, kidney, liver, ling, skeletal muscle, spleen and testis.

It localises to the cytoplasm. It is found in the mitochondrion outer membrane. The protein resides in the nucleus. The enzyme catalyses guanosine(34) in tRNA + queuine = queuosine(34) in tRNA + guanine. In terms of biological role, catalytic subunit of the queuine tRNA-ribosyltransferase (TGT) that catalyzes the base-exchange of a guanine (G) residue with queuine (Q) at position 34 (anticodon wobble position) in tRNAs with GU(N) anticodons (tRNA-Asp, -Asn, -His and -Tyr), resulting in the hypermodified nucleoside queuosine (7-(((4,5-cis-dihydroxy-2-cyclopenten-1-yl)amino)methyl)-7-deazaguanosine). Catalysis occurs through a double-displacement mechanism. The nucleophile active site attacks the C1' of nucleotide 34 to detach the guanine base from the RNA, forming a covalent enzyme-RNA intermediate. The proton acceptor active site deprotonates the incoming queuine, allowing a nucleophilic attack on the C1' of the ribose to form the product. Modification of cytoplasmic tRNAs with queuosine controls the elongation speed of cognate codons, thereby ensuring the correct folding of nascent proteins to maintain proteome integrity. This Mus musculus (Mouse) protein is Queuine tRNA-ribosyltransferase catalytic subunit 1.